Reading from the N-terminus, the 487-residue chain is Protein nucleotidyltransferase YdiU (487 aa).

Residues glycine 86, glycine 88, arginine 89, lysine 109, aspartate 121, glycine 122, arginine 172, and arginine 179 each contribute to the ATP site. Aspartate 248 serves as the catalytic Proton acceptor. Mg(2+) contacts are provided by asparagine 249 and aspartate 258. Residue aspartate 258 participates in ATP binding.

The protein belongs to the SELO family. Mg(2+) is required as a cofactor. Requires Mn(2+) as cofactor.

The catalysed reaction is L-seryl-[protein] + ATP = 3-O-(5'-adenylyl)-L-seryl-[protein] + diphosphate. The enzyme catalyses L-threonyl-[protein] + ATP = 3-O-(5'-adenylyl)-L-threonyl-[protein] + diphosphate. It catalyses the reaction L-tyrosyl-[protein] + ATP = O-(5'-adenylyl)-L-tyrosyl-[protein] + diphosphate. It carries out the reaction L-histidyl-[protein] + UTP = N(tele)-(5'-uridylyl)-L-histidyl-[protein] + diphosphate. The catalysed reaction is L-seryl-[protein] + UTP = O-(5'-uridylyl)-L-seryl-[protein] + diphosphate. The enzyme catalyses L-tyrosyl-[protein] + UTP = O-(5'-uridylyl)-L-tyrosyl-[protein] + diphosphate. Nucleotidyltransferase involved in the post-translational modification of proteins. It can catalyze the addition of adenosine monophosphate (AMP) or uridine monophosphate (UMP) to a protein, resulting in modifications known as AMPylation and UMPylation. This Sphingopyxis alaskensis (strain DSM 13593 / LMG 18877 / RB2256) (Sphingomonas alaskensis) protein is Protein nucleotidyltransferase YdiU.